The following is a 97-amino-acid chain: uncharacterized protein (97 aa).

A run of 3 helical transmembrane segments spans residues 7-27, 34-54, and 69-89; these read CIAP…IGLG, IPML…LMFS, and IVLY…PTIL.

Its subcellular location is the cell membrane. This is an uncharacterized protein from Haemophilus influenzae (strain ATCC 51907 / DSM 11121 / KW20 / Rd).